The sequence spans 174 residues: MPGQTQGAKRWRVPGRGWRWAGILLLVWLGLASPAAGRIDPYVSHYLRTTEPIELPWDAEGHMLTFTPEQLTDGKNRFQSACLNCHVGGSTLPAPNISLSLKDLRGATPPRDTIQALVEYQRDPRSYDGTEVSYGCRPVPPSWMDDEALRNLAAFILRAAQVAPGWGSNAIGGG.

A signal peptide spans 1-37; that stretch reads MPGQTQGAKRWRVPGRGWRWAGILLLVWLGLASPAAG. Residues Cys82, Cys85, His86, and Cys136 each coordinate heme c.

Belongs to the cytochrome c family. PsbV subfamily. Heme c serves as cofactor.

It localises to the cellular thylakoid membrane. Possible low-potential cytochrome c. The protein is Cytochrome c-550-like protein (psbV2) of Synechococcus sp. (strain JA-3-3Ab) (Cyanobacteria bacterium Yellowstone A-Prime).